The sequence spans 305 residues: GTP cyclohydrolase FolE2 (305 aa).

Belongs to the GTP cyclohydrolase IV family.

The catalysed reaction is GTP + H2O = 7,8-dihydroneopterin 3'-triphosphate + formate + H(+). It functions in the pathway cofactor biosynthesis; 7,8-dihydroneopterin triphosphate biosynthesis; 7,8-dihydroneopterin triphosphate from GTP: step 1/1. Its function is as follows. Converts GTP to 7,8-dihydroneopterin triphosphate. The polypeptide is GTP cyclohydrolase FolE2 (Xanthomonas euvesicatoria pv. vesicatoria (strain 85-10) (Xanthomonas campestris pv. vesicatoria)).